Consider the following 364-residue polypeptide: 3-dehydroquinate synthase (364 aa).

NAD(+)-binding positions include 75-80, 109-113, 133-134, lysine 146, lysine 155, and 173-176; these read DGEQYK, GVIGD, TT, and TLDT. Zn(2+) is bound by residues glutamate 188, histidine 251, and histidine 268.

The protein belongs to the sugar phosphate cyclases superfamily. Dehydroquinate synthase family. The cofactor is Co(2+). It depends on Zn(2+) as a cofactor. NAD(+) serves as cofactor.

It localises to the cytoplasm. It catalyses the reaction 7-phospho-2-dehydro-3-deoxy-D-arabino-heptonate = 3-dehydroquinate + phosphate. It participates in metabolic intermediate biosynthesis; chorismate biosynthesis; chorismate from D-erythrose 4-phosphate and phosphoenolpyruvate: step 2/7. Functionally, catalyzes the conversion of 3-deoxy-D-arabino-heptulosonate 7-phosphate (DAHP) to dehydroquinate (DHQ). In Dechloromonas aromatica (strain RCB), this protein is 3-dehydroquinate synthase.